Consider the following 873-residue polypeptide: Coatomer subunit gamma-2 (873 aa).

Basic and acidic residues predominate over residues 1–11; the sequence is MIKKFDKKDEE. The interval 1–21 is disordered; that stretch reads MIKKFDKKDEESGSGSNPFQN. 6 HEAT repeats span residues 64 to 101, 283 to 320, 321 to 355, 356 to 392, 394 to 430, and 467 to 504; these read TEAT…ISED, RELA…KHPS, AVTA…GSES, SVDR…KYPR, HSAM…ENPE, and PQPS…QNDD.

This sequence belongs to the COPG family. In terms of assembly, oligomeric complex.

The protein resides in the cytoplasm. Its subcellular location is the golgi apparatus membrane. The protein localises to the cytoplasmic vesicle. It localises to the COPI-coated vesicle membrane. In terms of biological role, the coatomer is a cytosolic protein complex that binds to dilysine motifs and reversibly associates with Golgi non-clathrin-coated vesicles, which further mediate biosynthetic protein transport from the ER, via the Golgi up to the trans Golgi network. Coatomer complex is required for budding from Golgi membranes, and is essential for the retrograde Golgi-to-ER transport of dilysine-tagged proteins. The polypeptide is Coatomer subunit gamma-2 (copg2) (Takifugu rubripes (Japanese pufferfish)).